A 381-amino-acid chain; its full sequence is UDP-N-acetylglucosamine--N-acetylmuramyl-(pentapeptide) pyrophosphoryl-undecaprenol N-acetylglucosamine transferase (381 aa).

Residues 10–12 (TGG), Asn-124, Arg-165, Ser-207, Ile-263, and Gln-308 contribute to the UDP-N-acetyl-alpha-D-glucosamine site.

It belongs to the glycosyltransferase 28 family. MurG subfamily.

The protein resides in the cell inner membrane. The catalysed reaction is di-trans,octa-cis-undecaprenyl diphospho-N-acetyl-alpha-D-muramoyl-L-alanyl-D-glutamyl-meso-2,6-diaminopimeloyl-D-alanyl-D-alanine + UDP-N-acetyl-alpha-D-glucosamine = di-trans,octa-cis-undecaprenyl diphospho-[N-acetyl-alpha-D-glucosaminyl-(1-&gt;4)]-N-acetyl-alpha-D-muramoyl-L-alanyl-D-glutamyl-meso-2,6-diaminopimeloyl-D-alanyl-D-alanine + UDP + H(+). Its pathway is cell wall biogenesis; peptidoglycan biosynthesis. Cell wall formation. Catalyzes the transfer of a GlcNAc subunit on undecaprenyl-pyrophosphoryl-MurNAc-pentapeptide (lipid intermediate I) to form undecaprenyl-pyrophosphoryl-MurNAc-(pentapeptide)GlcNAc (lipid intermediate II). This Trichlorobacter lovleyi (strain ATCC BAA-1151 / DSM 17278 / SZ) (Geobacter lovleyi) protein is UDP-N-acetylglucosamine--N-acetylmuramyl-(pentapeptide) pyrophosphoryl-undecaprenol N-acetylglucosamine transferase.